Reading from the N-terminus, the 100-residue chain is Large ribosomal subunit protein uL23 (100 aa).

It belongs to the universal ribosomal protein uL23 family. In terms of assembly, part of the 50S ribosomal subunit. Contacts protein L29, and trigger factor when it is bound to the ribosome.

One of the early assembly proteins it binds 23S rRNA. One of the proteins that surrounds the polypeptide exit tunnel on the outside of the ribosome. Forms the main docking site for trigger factor binding to the ribosome. This is Large ribosomal subunit protein uL23 from Buchnera aphidicola subsp. Baizongia pistaciae (strain Bp).